Consider the following 1295-residue polypeptide: Phosphoribosylformylglycinamidine synthase (1295 aa).

The segment at 305–327 (WPGAATGSGGEIRDEGATGRGAK) is disordered. ATP-binding positions include 307–318 (GAATGSGGEIRD) and Ala-678. Mg(2+) contacts are provided by Glu-718, Asn-722, and Asp-884. Ser-886 contributes to the ATP binding site. The region spanning 1042 to 1295 (VAVLREQGVN…IFRNARKQLG (254 aa)) is the Glutamine amidotransferase type-1 domain. Cys-1135 functions as the Nucleophile in the catalytic mechanism. Residues His-1260 and Glu-1262 contribute to the active site.

In the N-terminal section; belongs to the FGAMS family. Monomer.

Its subcellular location is the cytoplasm. The enzyme catalyses N(2)-formyl-N(1)-(5-phospho-beta-D-ribosyl)glycinamide + L-glutamine + ATP + H2O = 2-formamido-N(1)-(5-O-phospho-beta-D-ribosyl)acetamidine + L-glutamate + ADP + phosphate + H(+). Its pathway is purine metabolism; IMP biosynthesis via de novo pathway; 5-amino-1-(5-phospho-D-ribosyl)imidazole from N(2)-formyl-N(1)-(5-phospho-D-ribosyl)glycinamide: step 1/2. Functionally, phosphoribosylformylglycinamidine synthase involved in the purines biosynthetic pathway. Catalyzes the ATP-dependent conversion of formylglycinamide ribonucleotide (FGAR) and glutamine to yield formylglycinamidine ribonucleotide (FGAM) and glutamate. This is Phosphoribosylformylglycinamidine synthase from Escherichia coli O6:K15:H31 (strain 536 / UPEC).